We begin with the raw amino-acid sequence, 103 residues long: Large ribosomal subunit protein bL21 (103 aa).

It belongs to the bacterial ribosomal protein bL21 family. As to quaternary structure, part of the 50S ribosomal subunit. Contacts protein L20.

In terms of biological role, this protein binds to 23S rRNA in the presence of protein L20. In Borrelia garinii subsp. bavariensis (strain ATCC BAA-2496 / DSM 23469 / PBi) (Borreliella bavariensis), this protein is Large ribosomal subunit protein bL21.